A 574-amino-acid chain; its full sequence is Septation ring formation regulator EzrA (574 aa).

Residues 1–7 lie on the Extracellular side of the membrane; sequence MSSGIVL. The chain crosses the membrane as a helical span at residues 8–26; that stretch reads LIVAIVLVVIIAYLIAIII. Over 27–574 the chain is Cytoplasmic; sequence RKRNDSLITK…YEKTRETIRF (548 aa). 3 coiled-coil regions span residues 102-141, 255-368, and 409-495; these read NFIR…EEKN, KNIE…KDVL, and LKNI…EETA.

The protein belongs to the EzrA family.

Its subcellular location is the cell membrane. Negative regulator of FtsZ ring formation; modulates the frequency and position of FtsZ ring formation. Inhibits FtsZ ring formation at polar sites. Interacts either with FtsZ or with one of its binding partners to promote depolymerization. This chain is Septation ring formation regulator EzrA, found in Streptococcus mutans serotype c (strain ATCC 700610 / UA159).